The primary structure comprises 853 residues: MSTIDNLDAHTPMMQQYLKLKAQHPEILLFYRMGDFYELFYDDARRASQLLDISLTKRGASAGEPIPMAGIPHHAVENYLAKLVNQGESVAICEQIGDPATSKGPVERKVVRIVTPGTISDEALLQERQDNLLAAIWQDSKGYGYATLDISSGRFRLSEPVDRETMAAELQRTNPAELLYAEDFAEMALIDGRRGLRRRPLWEFEIDTARQQLNLQFGTRDLIGFGVENAPRGLCAAGCLLQYVKDTQRTSLPHIRSITMERQQDSIIMDAATRRNLEITQNLAGGVDNTLASVLDCTVTPMGSRMLKRWLHMPVRDTKTLIERQQTIGALQDVTSELQPVLRQVGDLERILARLALRTARPRDLARMRHAFQQLPELRAQLETVTSAPVQNLREKMGEFTELRDLLERAIIDAPPVLVRDGGVIAPGYNEELDEWRALADGATDYLDRLEIRERERTGLDTLKVGFNAVHGYYIQISRGQSHLAPINYVRRQTLKNAERYIIPELKEYEDKVLTSKGKALALEKQLYDELFDLLLPHLAELQQSANALAELDVLVNLAERAYTLNYTCPTFSDKPGIRITEGRHPVVEQVLNEPFIANPLNLSPQRRMLIITGPNMGGKSTYMRQTALIALLAYIGSYVPAQSVEIGPIDRIFTRVGAADDLASGRSTFMVEMTETANILHNATENSLVLMDEIGRGTSTYDGLSLAWACAENLANKIKALTLFATHYFELTQLPEKMEGVANVHLDALEHGDTIAFMHSVQDGAASKSYGLAVAALAGVPKEVIKRARQKLRELESLSPNAAATQVDGTQMSLLSVAEETSPAVEALENLDPDSLTPRQALEWIYRLKSLV.

An ATP-binding site is contributed by 614 to 621; the sequence is GPNMGGKS.

Belongs to the DNA mismatch repair MutS family.

Its function is as follows. This protein is involved in the repair of mismatches in DNA. It is possible that it carries out the mismatch recognition step. This protein has a weak ATPase activity. This Citrobacter koseri (strain ATCC BAA-895 / CDC 4225-83 / SGSC4696) protein is DNA mismatch repair protein MutS.